A 211-amino-acid polypeptide reads, in one-letter code: MFVLASASKARQKLLDQIALRHKVIVSDFDETQLQEPDPILKVKLLAKAKADSALKKLIEENHALNTYQALLGCDSLFEFKGEIFEKPIDKEQLISRWQRMSGQSGFLHTGHCLISLDNSKSDRESISQNNSCDGVVSTRIEFMNLSNFEINKYASTSEPYNCAGGFAIEGNGGLFIKKIDGCFSNVIGLSLPWLKNNLEKFGLSRLLLDR.

Asp-75 acts as the Proton acceptor in catalysis.

The protein belongs to the Maf family. Requires a divalent metal cation as cofactor.

Its subcellular location is the cytoplasm. It carries out the reaction a ribonucleoside 5'-triphosphate + H2O = a ribonucleoside 5'-phosphate + diphosphate + H(+). The enzyme catalyses a 2'-deoxyribonucleoside 5'-triphosphate + H2O = a 2'-deoxyribonucleoside 5'-phosphate + diphosphate + H(+). Nucleoside triphosphate pyrophosphatase. May have a dual role in cell division arrest and in preventing the incorporation of modified nucleotides into cellular nucleic acids. This chain is Nucleoside triphosphate pyrophosphatase, found in Prochlorococcus marinus (strain NATL2A).